A 20-amino-acid chain; its full sequence is Poneritoxin (20 aa).

M18 carries the post-translational modification Methionine sulfoxide; in form U1-PONTX-Dq3c. A Lysine amide; in form U1-PONTX-Dq3a and U1-PONTX-Dq3c modification is found at K19.

The peptide spanning residues 2 to 19 occurs in 3 forms and has been given 3 different names. U1-PONTX-Dq3a has an amidated Lys-19, U1-PONTX-Dq3c has an amidated Lys-19 and an oxidized Met-18, and U1-PONTX-Dq3b has no modifications at either Met-18 or Lys-19. As to expression, expressed by the venom gland.

The protein resides in the secreted. Functionally, may have antimicrobial properties, like most ant linear peptides. This is Poneritoxin from Dinoponera quadriceps (South American ant).